The sequence spans 338 residues: Activator of 90 kDa heat shock protein ATPase homolog 1 (338 aa).

Lys-3 carries the post-translational modification N6-acetyllysine. Residue Lys-182 forms a Glycyl lysine isopeptide (Lys-Gly) (interchain with G-Cter in SUMO1) linkage. Position 193 is a phosphoserine (Ser-193). Lys-203 participates in a covalent cross-link: Glycyl lysine isopeptide (Lys-Gly) (interchain with G-Cter in SUMO2). N6-acetyllysine is present on Lys-212. Tyr-223 carries the post-translational modification Phosphotyrosine; by ABL.

The protein belongs to the AHA1 family. As to quaternary structure, interacts with HSPCA/HSP90. Interacts with HSP90AA1; the interaction activates HSP90AA1 ATPase activity. Interacts with HSP90AB1. Interacts with GCH1. Interacts with SRPK1. Interacts with FLCN. Post-translationally, phosphorylation at Tyr-223 enhances binding to chaperone HSP90AA1.

It localises to the cytoplasm. Its subcellular location is the cytosol. It is found in the endoplasmic reticulum. Acts as a co-chaperone of HSP90AA1. Activates the ATPase activity of HSP90AA1 leading to increase in its chaperone activity. Competes with the inhibitory co-chaperone FNIP1 for binding to HSP90AA1, thereby providing a reciprocal regulatory mechanism for chaperoning of client proteins. Competes with the inhibitory co-chaperone TSC1 for binding to HSP90AA1, thereby providing a reciprocal regulatory mechanism for chaperoning of client proteins. This Mus musculus (Mouse) protein is Activator of 90 kDa heat shock protein ATPase homolog 1 (Ahsa1).